Consider the following 766-residue polypeptide: Protein zer-1 homolog (766 aa).

A2 is modified (N-acetylalanine). LRR repeat units follow at residues 226–245 (SLVLYNMDLSDDHIRVIVQL), 246–268 (HKLRHLDISRDRLSSYYKFKLTR), and 278–302 (LGNLMSLDISGHMILENCSISKMEE). ARM repeat units lie at residues 427–467 (RSEQ…NFGI), 511–556 (DNDH…NITD), 558–600 (TPDN…NVAE), 602–643 (KELR…HIMF), and 714–756 (PDKY…HCSN).

This sequence belongs to the zyg-11 family. As to quaternary structure, interacts with the ELOC-ELOB/Elongin BC complex. Part of an E3 ubiquitin ligase complex including ZER1, CUL2 and Elongin BC.

Serves as substrate adapter subunit in the E3 ubiquitin ligase complex ZYG11B-CUL2-Elongin BC. Acts redudantly with ZYG11B to target substrates bearing N-terminal glycine degrons for proteasomal degradation. Involved in the clearance of proteolytic fragments generated by caspase cleavage during apoptosis since N-terminal glycine degrons are strongly enriched at caspase cleavage sites. Also important in the quality control of protein N-myristoylation in which N-terminal glycine degrons are conditionally exposed after a failure of N-myristoylation. The chain is Protein zer-1 homolog (ZER1) from Pongo abelii (Sumatran orangutan).